Consider the following 283-residue polypeptide: Ribonuclease P protein subunit p38 (283 aa).

A2 is subject to N-acetylalanine. A phosphoserine mark is found at S12, S226, and S235.

It belongs to the eukaryotic ribosomal protein eL8 family. In terms of assembly, component of nuclear RNase P and RNase MRP ribonucleoproteins. RNase P consists of a catalytic RNA moiety and about 10 protein subunits; POP1, POP4, POP5, POP7, RPP14, RPP21, RPP25, RPP30, RPP38 and RPP40. Within the RNase P complex, POP1, POP7 and RPP25 form the 'finger' subcomplex, POP5, RPP14, RPP40 and homodimeric RPP30 form the 'palm' subcomplex, and RPP21, POP4 and RPP38 form the 'wrist' subcomplex. All subunits of the RNase P complex interact with the catalytic RNA. Several subunits of RNase P are also part of the RNase MRP complex. RNase MRP consists of a catalytic RNA moiety and about 8 protein subunits; POP1, POP7, RPP25, RPP30, RPP38, RPP40 and possibly also POP4 and POP5.

It localises to the nucleus. It is found in the nucleolus. Its function is as follows. Component of ribonuclease P, a ribonucleoprotein complex that generates mature tRNA molecules by cleaving their 5'-ends. Also a component of the MRP ribonuclease complex, which cleaves pre-rRNA sequences. The polypeptide is Ribonuclease P protein subunit p38 (RPP38) (Homo sapiens (Human)).